Reading from the N-terminus, the 214-residue chain is Ribosomal RNA small subunit methyltransferase G (214 aa).

S-adenosyl-L-methionine-binding positions include Gly77, Leu82, 128 to 129, and Arg143; that span reads VE.

This sequence belongs to the methyltransferase superfamily. RNA methyltransferase RsmG family.

The protein resides in the cytoplasm. It catalyses the reaction guanosine(527) in 16S rRNA + S-adenosyl-L-methionine = N(7)-methylguanosine(527) in 16S rRNA + S-adenosyl-L-homocysteine. Specifically methylates the N7 position of guanine in position 527 of 16S rRNA. This chain is Ribosomal RNA small subunit methyltransferase G, found in Nitrosomonas eutropha (strain DSM 101675 / C91 / Nm57).